The sequence spans 474 residues: Cyclin-dependent kinase 18 (474 aa).

Residues Ser-14, Ser-74, Ser-89, Ser-98, Ser-117, and Ser-132 each carry the phosphoserine modification. A disordered region spans residues 44 to 87 (DLQLGPLGRDPLQECSTFSPTDSGEEPGQLSPGVQFQRRQNQRR). In terms of domain architecture, Protein kinase spans 144-425 (YVKLDKLGEG…AEAALSHPYF (282 aa)). Residues 150 to 158 (LGEGTYATV) and Lys-173 each bind ATP. Asp-265 acts as the Proton acceptor in catalysis. Phosphoserine occurs at positions 440 and 443.

The protein belongs to the protein kinase superfamily. CMGC Ser/Thr protein kinase family. CDC2/CDKX subfamily.

The enzyme catalyses L-seryl-[protein] + ATP = O-phospho-L-seryl-[protein] + ADP + H(+). It catalyses the reaction L-threonyl-[protein] + ATP = O-phospho-L-threonyl-[protein] + ADP + H(+). Functionally, may play a role in signal transduction cascades in terminally differentiated cells. The polypeptide is Cyclin-dependent kinase 18 (CDK18) (Pongo abelii (Sumatran orangutan)).